The primary structure comprises 237 residues: NAD-dependent protein deacetylase (237 aa).

The Deacetylase sirtuin-type domain occupies Met-1–Glu-237. Residues Ala-25, Thr-29, Arg-37, Gln-100, Ile-102, Asp-103, and His-118 each contribute to the NAD(+) site. Residues Ile-102 and Asp-103 each coordinate nicotinamide. His-118 serves as the catalytic Proton acceptor. Positions 126, 129, 144, and 147 each coordinate Zn(2+). 3 residues coordinate NAD(+): Thr-185, Ser-186, and Asn-209.

Belongs to the sirtuin family. Class U subfamily.

It localises to the cytoplasm. It catalyses the reaction N(6)-acetyl-L-lysyl-[protein] + NAD(+) + H2O = 2''-O-acetyl-ADP-D-ribose + nicotinamide + L-lysyl-[protein]. In terms of biological role, NAD-dependent protein deacetylase which modulates the activities of several enzymes which are inactive in their acetylated form. This Enterococcus faecalis (strain ATCC 700802 / V583) protein is NAD-dependent protein deacetylase.